The primary structure comprises 445 residues: 3-phosphoshikimate 1-carboxyvinyltransferase (445 aa).

3-phosphoshikimate contacts are provided by Lys-28, Ser-29, and Arg-33. Lys-28 is a binding site for phosphoenolpyruvate. Phosphoenolpyruvate-binding residues include Gly-101 and Arg-129. Residues Ser-175, Gln-177, Asp-328, and Lys-355 each contribute to the 3-phosphoshikimate site. Gln-177 contributes to the phosphoenolpyruvate binding site. The active-site Proton acceptor is the Asp-328. Arg-359 and Arg-402 together coordinate phosphoenolpyruvate.

It belongs to the EPSP synthase family. As to quaternary structure, monomer.

It localises to the cytoplasm. The catalysed reaction is 3-phosphoshikimate + phosphoenolpyruvate = 5-O-(1-carboxyvinyl)-3-phosphoshikimate + phosphate. Its pathway is metabolic intermediate biosynthesis; chorismate biosynthesis; chorismate from D-erythrose 4-phosphate and phosphoenolpyruvate: step 6/7. Functionally, catalyzes the transfer of the enolpyruvyl moiety of phosphoenolpyruvate (PEP) to the 5-hydroxyl of shikimate-3-phosphate (S3P) to produce enolpyruvyl shikimate-3-phosphate and inorganic phosphate. This Bradyrhizobium sp. (strain BTAi1 / ATCC BAA-1182) protein is 3-phosphoshikimate 1-carboxyvinyltransferase.